The following is a 672-amino-acid chain: uncharacterized protein (672 aa).

A signal peptide spans M1 to A24. The next 2 helical transmembrane spans lie at I226–K246 and I254–L274. Over residues S363–P372 the composition is skewed to polar residues. The interval S363–R384 is disordered. 4 helical membrane-spanning segments follow: residues I410–I430, C436–F456, V469–T489, and V562–F582. The span at H628–G646 shows a compositional bias: basic and acidic residues. Residues H628–K672 form a disordered region.

The protein belongs to the TrbL/VirB6 family.

It is found in the cell membrane. This is an uncharacterized protein from Rickettsia prowazekii (strain Madrid E).